The primary structure comprises 449 residues: Probable protoheme IX farnesyltransferase, mitochondrial (449 aa).

Positions 99–138 (TTSTTTTTNINENNIKNENNNENNNENSNNNNEQSIKSNQ) are enriched in low complexity. Positions 99–140 (TTSTTTTTNINENNIKNENNNENNNENSNNNNEQSIKSNQTK) are disordered. 7 consecutive transmembrane segments (helical) span residues 163–183 (LTAI…WVVL), 245–267 (MAVT…LYCW), 279–299 (TWIG…AATG), 303–323 (AIGM…FLAL), 352–372 (SLAH…FFNF), 374–394 (VHPI…LPFI), and 402–422 (LYII…LLRQ).

Belongs to the UbiA prenyltransferase family.

The protein resides in the mitochondrion membrane. Functionally, converts protoheme IX and farnesyl diphosphate to heme O. This is Probable protoheme IX farnesyltransferase, mitochondrial (cox10) from Dictyostelium discoideum (Social amoeba).